The sequence spans 192 residues: LOB domain-containing protein 32 (192 aa).

Residues 4 to 105 form the LOB domain; it reads NRCAVCKILN…QDIESAVNEL (102 aa).

It belongs to the LOB domain-containing protein family.

The chain is LOB domain-containing protein 32 (LBD32) from Arabidopsis thaliana (Mouse-ear cress).